Consider the following 94-residue polypeptide: Small ribosomal subunit protein uS19 (94 aa).

It belongs to the universal ribosomal protein uS19 family.

Protein S19 forms a complex with S13 that binds strongly to the 16S ribosomal RNA. In Dictyoglomus thermophilum (strain ATCC 35947 / DSM 3960 / H-6-12), this protein is Small ribosomal subunit protein uS19.